The primary structure comprises 336 residues: Ketol-acid reductoisomerase (NADP(+)) 1 (336 aa).

The 180-residue stretch at 2 to 181 (AKVYYEKDVT…GATRAGVLET (180 aa)) folds into the KARI N-terminal Rossmann domain. Residues 25 to 28 (YGSQ), Arg48, Ser52, and 82 to 85 (DELQ) each bind NADP(+). His107 is an active-site residue. Gly133 contacts NADP(+). The KARI C-terminal knotted domain maps to 182 to 327 (TFKEETETDL…RKLREMMPFV (146 aa)). 4 residues coordinate Mg(2+): Asp190, Glu194, Glu226, and Glu230. Position 251 (Ser251) interacts with substrate.

It belongs to the ketol-acid reductoisomerase family. Requires Mg(2+) as cofactor.

It carries out the reaction (2R)-2,3-dihydroxy-3-methylbutanoate + NADP(+) = (2S)-2-acetolactate + NADPH + H(+). The enzyme catalyses (2R,3R)-2,3-dihydroxy-3-methylpentanoate + NADP(+) = (S)-2-ethyl-2-hydroxy-3-oxobutanoate + NADPH + H(+). Its pathway is amino-acid biosynthesis; L-isoleucine biosynthesis; L-isoleucine from 2-oxobutanoate: step 2/4. The protein operates within amino-acid biosynthesis; L-valine biosynthesis; L-valine from pyruvate: step 2/4. Its function is as follows. Involved in the biosynthesis of branched-chain amino acids (BCAA). Catalyzes an alkyl-migration followed by a ketol-acid reduction of (S)-2-acetolactate (S2AL) to yield (R)-2,3-dihydroxy-isovalerate. In the isomerase reaction, S2AL is rearranged via a Mg-dependent methyl migration to produce 3-hydroxy-3-methyl-2-ketobutyrate (HMKB). In the reductase reaction, this 2-ketoacid undergoes a metal-dependent reduction by NADPH to yield (R)-2,3-dihydroxy-isovalerate. This chain is Ketol-acid reductoisomerase (NADP(+)) 1, found in Bacillus cereus (strain ZK / E33L).